Reading from the N-terminus, the 597-residue chain is Scarecrow-like protein 5 (597 aa).

The segment at 111-172 (ESSSGTKSHP…SPLSGSSATN (62 aa)) is disordered. Positions 123–169 (NNKNNSSSTTSFSSNESPISQANNNNLSRFNNHSPEENNNSPLSGSS) are enriched in low complexity. The 380-residue stretch at 218–597 (SMEMISRGDL…QPLITSCAWR (380 aa)) folds into the GRAS domain. The interval 225 to 285 (GDLKGVLYEC…VARLASSGSS (61 aa)) is leucine repeat I (LRI). Residues 304-369 (MHILYEACPY…GGPPNVRITG (66 aa)) form a VHIID region. The VHIID motif lies at 335-339 (VHIID). Residues 385 to 417 (LVGQRLGKLAEMCGVPFEFHGAALCCTEVEIEK) are leucine repeat II (LRII). The tract at residues 426 to 520 (LAVNFPLVLH…QHCLAREVVN (95 aa)) is PFYRE. The segment at 523–597 (ACEGVEREER…QPLITSCAWR (75 aa)) is SAW.

The protein belongs to the GRAS family. In terms of tissue distribution, expressed in seedlings, roots, shoots, leaves, flowers and siliques.

It is found in the nucleus. Its function is as follows. Probable transcription factor involved in plant development. The protein is Scarecrow-like protein 5 (SCL5) of Arabidopsis thaliana (Mouse-ear cress).